The sequence spans 388 residues: Chorismate synthase (388 aa).

NADP(+) contacts are provided by R39 and R45. FMN is bound by residues R130 to S132, N251 to A252, G296, K311 to T315, and R337.

This sequence belongs to the chorismate synthase family. In terms of assembly, homotetramer. The cofactor is FMNH2.

It catalyses the reaction 5-O-(1-carboxyvinyl)-3-phosphoshikimate = chorismate + phosphate. It functions in the pathway metabolic intermediate biosynthesis; chorismate biosynthesis; chorismate from D-erythrose 4-phosphate and phosphoenolpyruvate: step 7/7. Its function is as follows. Catalyzes the anti-1,4-elimination of the C-3 phosphate and the C-6 proR hydrogen from 5-enolpyruvylshikimate-3-phosphate (EPSP) to yield chorismate, which is the branch point compound that serves as the starting substrate for the three terminal pathways of aromatic amino acid biosynthesis. This reaction introduces a second double bond into the aromatic ring system. The protein is Chorismate synthase of Streptococcus mutans serotype c (strain ATCC 700610 / UA159).